A 127-amino-acid chain; its full sequence is Large ribosomal subunit protein eL8 (127 aa).

It belongs to the eukaryotic ribosomal protein eL8 family. Part of the 50S ribosomal subunit. Probably part of the RNase P complex.

Its subcellular location is the cytoplasm. Its function is as follows. Multifunctional RNA-binding protein that recognizes the K-turn motif in ribosomal RNA, the RNA component of RNase P, box H/ACA, box C/D and box C'/D' sRNAs. In Picrophilus torridus (strain ATCC 700027 / DSM 9790 / JCM 10055 / NBRC 100828 / KAW 2/3), this protein is Large ribosomal subunit protein eL8.